A 235-amino-acid polypeptide reads, in one-letter code: Large ribosomal subunit protein uL1 (235 aa).

Belongs to the universal ribosomal protein uL1 family. In terms of assembly, part of the 50S ribosomal subunit.

In terms of biological role, binds directly to 23S rRNA. The L1 stalk is quite mobile in the ribosome, and is involved in E site tRNA release. Protein L1 is also a translational repressor protein, it controls the translation of the L11 operon by binding to its mRNA. The protein is Large ribosomal subunit protein uL1 of Prochlorococcus marinus (strain MIT 9301).